Reading from the N-terminus, the 127-residue chain is MORF4 family-associated protein 1 (127 aa).

The stretch at Arg92–Ser126 forms a coiled coil.

It belongs to the MORF4 family-associated protein family. In terms of assembly, found in a complex composed of MORF4L1, MRFAP1 and RB1. Interacts via its N-terminus with MORF4L1. Interacts with CSTB and MORF4L2.

Its subcellular location is the nucleus. The protein resides in the cytoplasm. The protein localises to the perinuclear region. The chain is MORF4 family-associated protein 1 from Homo sapiens (Human).